The sequence spans 161 residues: NADH-quinone oxidoreductase subunit I (161 aa).

2 4Fe-4S ferredoxin-type domains span residues 52 to 82 (LRRYPNGEERCIACKLCEAVCPALAITIESE) and 92 to 121 (KRYDIDLTKCIFCGFCEEACPVDAVVETRV). [4Fe-4S] cluster contacts are provided by C62, C65, C68, C72, C101, C104, C107, and C111.

This sequence belongs to the complex I 23 kDa subunit family. In terms of assembly, NDH-1 is composed of 14 different subunits. Subunits NuoA, H, J, K, L, M, N constitute the membrane sector of the complex. Requires [4Fe-4S] cluster as cofactor.

It is found in the cell inner membrane. The catalysed reaction is a quinone + NADH + 5 H(+)(in) = a quinol + NAD(+) + 4 H(+)(out). NDH-1 shuttles electrons from NADH, via FMN and iron-sulfur (Fe-S) centers, to quinones in the respiratory chain. The immediate electron acceptor for the enzyme in this species is believed to be ubiquinone. Couples the redox reaction to proton translocation (for every two electrons transferred, four hydrogen ions are translocated across the cytoplasmic membrane), and thus conserves the redox energy in a proton gradient. The sequence is that of NADH-quinone oxidoreductase subunit I from Aromatoleum aromaticum (strain DSM 19018 / LMG 30748 / EbN1) (Azoarcus sp. (strain EbN1)).